Consider the following 198-residue polypeptide: MLMSDSLNAAALDQLFRTARTQNAFADTPVSQEVLRELYELVKWGPTAANSGPARFVFVTSADGKAKLKPALSEGNAAKTLAAPVTVIVAHDEDFHEKLPYLFPHADAKSWFDGPREGRAESAFRNGSLQGAYLILAARALGLDAGPMSGFDNAKVDAAFFAGTPIKSNFLVNLGYGDPAGLFPRSPRLSFDEAARFE.

Belongs to the nitroreductase family. HadB/RutE subfamily. Requires FMN as cofactor.

This chain is Putative NADH dehydrogenase/NAD(P)H nitroreductase XOO4267, found in Xanthomonas oryzae pv. oryzae (strain KACC10331 / KXO85).